Consider the following 391-residue polypeptide: Methyltransferase/ribosomally synthesized type I borosin cyclic peptide precursor cmaMA (391 aa).

Residues 1–253 (MDATANPKAG…TISTFYLPPK (253 aa)) form a methyltransferase domain region. Active-site residues include Arg-72, Tyr-76, and Tyr-98. 8 residues coordinate S-adenosyl-L-methionine: Tyr-98, His-100, Val-103, Ala-130, Gln-172, Ala-215, Ser-246, and Thr-247. Residues 254-373 (APSAKVSLNR…AQLSGALKEG (120 aa)) are clasp domain. The segment at 374-376 (GVP) is precursor leader. The residue at position 382 (Leu-382) is an N-methylleucine. 2 positions are modified to N-methylphenylalanine: Phe-385 and Phe-386. N-methylisoleucine occurs at positions 387 and 388.

In the N-terminal section; belongs to the precorrin methyltransferase family. Homodimer. Post-translationally, cmaMA automethylates at Leu-382, Phe-385, Phe-386, Ile-387 and Ile-388 before being processed by the prolyloligopeptidase ledP which likely forms a peptidyl ester upon removal of the follower propeptide, which then undergoes macrocyclization with the N-terminus of the modified core peptide. Peptide backbone alpha-N-methylations change the physicochemical properties of amide bonds to provide structural constraints and other favorable characteristics including biological membrane permeability to peptides.

It participates in secondary metabolite biosynthesis. Functionally, fusion protein of the methyltransferase cmaM and a type I borosin core peptide; part of the gene cluster that mediates the biosynthesis of a type I borosin, a highly methylated cyclic peptide with potent biological activities. Type I borosins derive from the C-terminus of the fusion protein, and it is the same protein that methylates its own C-terminus using S-adenosyl methionine (SAM). The C-terminus is subsequently cleaved off and macrocyclized by a prolyloligopeptidase to give the final product. The protein is Methyltransferase/ribosomally synthesized type I borosin cyclic peptide precursor cmaMA of Coprinopsis marcescibilis (Agaric fungus).